We begin with the raw amino-acid sequence, 522 residues long: MEELQGYFEKDRSRQQPFLYPLLFQEYIYALAHGRGLNGNSSIFYEPRKVFGYDSKSSLALVKRLITRIYQQNSFLSPVNDSNQNRFVGHHHNNLFYSSFYSQMISEGFAIIVEIPFSLQLVSHFKEKEIPKFHNLRSIHSIFPFLEDKFLHFNYVSDILIPHPIHMEILVQILQCWIQDVPLLHFLGFFLHEYHNWNSFLITKNKSSYSFSKENKRLFRLVYNSYVSECEFVFVFLRKHSSYLRFISFRTFLERRYFYGKMEHRQTEHLIVVYCDYFNGTLWFFKDPFMHYVRCQGKAILSSKGTHLLMKKWKYHFVNFWQYNFHFWYQSYRIHINQLSNCSFYFLGYLSSLLKKSSTVRNQMLENSFLIDTIITKFDTAVPVIFLIGALSKAPFCTVSGHPISKPIWTDLSDSYIIERFGRICRNLSHYHSGSSKKHGLYRIKYILRLSCARTLARKHKSTVRTFMQKLGSGLVEEFFIEGEQGLSLILPKAIPFIFQGSHRERIWYLDIIRINDLVNHS.

This sequence belongs to the intron maturase 2 family. MatK subfamily.

The protein resides in the plastid. The protein localises to the chloroplast. Functionally, usually encoded in the trnK tRNA gene intron. Probably assists in splicing its own and other chloroplast group II introns. The chain is Maturase K from Aristea glauca.